A 284-amino-acid polypeptide reads, in one-letter code: Nucleotide-binding protein NGK_0463 (284 aa).

An ATP-binding site is contributed by 8-15 (GLSGSGKS). 58 to 61 (DVRS) contributes to the GTP binding site.

This sequence belongs to the RapZ-like family.

In terms of biological role, displays ATPase and GTPase activities. The polypeptide is Nucleotide-binding protein NGK_0463 (Neisseria gonorrhoeae (strain NCCP11945)).